Consider the following 266-residue polypeptide: Sesquipedalian-1 (266 aa).

The PH domain occupies 17 to 113 (PVDNAGFLYK…WVKALSRASF (97 aa)). The segment at 165 to 184 (QPSVAPQRPPPLPPRRRASA) is disordered. A Phosphoserine modification is found at Ser183. Residues 191–203 (SFAQLHARYGLEV) carry the F&amp;H motif.

Belongs to the sesquipedalian family. In terms of assembly, forms homodimers and heterodimers with PHETA2. Interacts with OCRL and INPP5B. Interaction with OCRL may be important for endosomal morphology and function.

The protein localises to the early endosome. Its subcellular location is the recycling endosome. It is found in the golgi apparatus. It localises to the trans-Golgi network. The protein resides in the cytoplasmic vesicle. The protein localises to the clathrin-coated vesicle. In terms of biological role, plays a role in endocytic trafficking. Required for receptor recycling from endosomes, both to the trans-Golgi network and the plasma membrane. In Mus musculus (Mouse), this protein is Sesquipedalian-1.